The sequence spans 237 residues: Uridylate kinase (237 aa).

Residue 9-12 (KLSG) coordinates ATP. The involved in allosteric activation by GTP stretch occupies residues 17-22 (GSQGYG). Gly-51 contacts UMP. 2 residues coordinate ATP: Gly-52 and Arg-56. Residues Asp-71 and 132–139 (CGNPFFTT) each bind UMP. ATP is bound by residues Thr-159, Tyr-165, and Asp-168.

This sequence belongs to the UMP kinase family. Homohexamer.

It is found in the cytoplasm. It catalyses the reaction UMP + ATP = UDP + ADP. Its pathway is pyrimidine metabolism; CTP biosynthesis via de novo pathway; UDP from UMP (UMPK route): step 1/1. Allosterically activated by GTP. Inhibited by UTP. Its function is as follows. Catalyzes the reversible phosphorylation of UMP to UDP. The polypeptide is Uridylate kinase (Synechococcus sp. (strain CC9902)).